We begin with the raw amino-acid sequence, 366 residues long: NADP-dependent oxidoreductase domain-containing protein 1 (366 aa).

This sequence belongs to the pyrroline-5-carboxylate reductase family.

Its function is as follows. Probable oxidoreductase. This Mus musculus (Mouse) protein is NADP-dependent oxidoreductase domain-containing protein 1 (Noxred1).